The sequence spans 375 residues: o-succinylbenzoate synthase (375 aa).

The Proton donor role is filled by Lys166. Mg(2+) contacts are provided by Asp191, Glu216, and Asp241. Catalysis depends on Lys265, which acts as the Proton acceptor.

This sequence belongs to the mandelate racemase/muconate lactonizing enzyme family. MenC type 2 subfamily. As to quaternary structure, homotetramer. A divalent metal cation is required as a cofactor.

The enzyme catalyses (1R,6R)-6-hydroxy-2-succinyl-cyclohexa-2,4-diene-1-carboxylate = 2-succinylbenzoate + H2O. It catalyses the reaction N-acetyl-D-methionine = N-acetyl-L-methionine. It participates in quinol/quinone metabolism; 1,4-dihydroxy-2-naphthoate biosynthesis; 1,4-dihydroxy-2-naphthoate from chorismate: step 4/7. It functions in the pathway quinol/quinone metabolism; menaquinone biosynthesis. In terms of biological role, converts 2-succinyl-6-hydroxy-2,4-cyclohexadiene-1-carboxylate (SHCHC) to 2-succinylbenzoate (OSB). Also acts as a N-succinylamino acid racemase (NSAR) that catalyzes the racemization of N-succinyl-D/L-phenylalanine. Can catalyze the racemization of a broad range of N-acylamino acids, including N-acetyl-D-methionine, N-formyl-D/L-methionine, N-formyl-D/L-norleucine, N-formyl-D/L-aminobutyric acid, N-formyl-D/L-norvaline, N-formyl-D/L-homophenylalanine, N-carbamoyl-D-methionine and N-carbamoyl-D-norleucine. May be a bifunctional enzyme involved in menaquinone biosynthesis and in an irreversible pathway for the conversion of D- to L-amino acids, thereby facilitating the survival and/or growth of the organism. This is o-succinylbenzoate synthase from Geobacillus stearothermophilus (Bacillus stearothermophilus).